A 277-amino-acid polypeptide reads, in one-letter code: NAD kinase (277 aa).

The active-site Proton acceptor is the Asp-67. Residues 67–68, Arg-72, 137–138, Lys-148, Arg-165, Asp-167, 178–183, Leu-202, and Gln-236 each bind NAD(+); these read DG, NE, and TGYAMS.

It belongs to the NAD kinase family. A divalent metal cation is required as a cofactor.

Its subcellular location is the cytoplasm. It catalyses the reaction NAD(+) + ATP = ADP + NADP(+) + H(+). Functionally, involved in the regulation of the intracellular balance of NAD and NADP, and is a key enzyme in the biosynthesis of NADP. Catalyzes specifically the phosphorylation on 2'-hydroxyl of the adenosine moiety of NAD to yield NADP. This chain is NAD kinase, found in Pyrococcus abyssi (strain GE5 / Orsay).